A 400-amino-acid polypeptide reads, in one-letter code: Mu-type opioid receptor (400 aa).

Over 1 to 68 the chain is Extracellular; sequence MDSSAAPTNA…CPPTGSPSMI (68 aa). N-linked (GlcNAc...) asparagine glycans are attached at residues Asn9, Asn12, Asn33, Asn40, and Asn48. A helical transmembrane segment spans residues 69–93; the sequence is TAITIMALYSIVCVVGLFGNFLVMY. Over 94-106 the chain is Cytoplasmic; the sequence is VIVRYTKMKTATN. Residues 107–131 traverse the membrane as a helical segment; sequence IYIFNLALADALATSTLPFQSVNYL. The Extracellular segment spans residues 132–142; it reads MGTWPFGTILC. Residues Cys142 and Cys219 are joined by a disulfide bond. The helical transmembrane segment at 143-165 threads the bilayer; that stretch reads KIVISIDYYNMFTSIFTLCTMSV. At 166 to 185 the chain is on the cytoplasmic side; the sequence is DRYIAVCHPVKALDFRTPRN. The residue at position 168 (Tyr168) is a Phosphotyrosine. The chain crosses the membrane as a helical span at residues 186–207; sequence AKIINVCNWILSSAIGLPVMFM. Residues 208–230 lie on the Extracellular side of the membrane; the sequence is ATTKYRQGSIDCTLTFSHPTWYW. Residues 231–255 traverse the membrane as a helical segment; the sequence is ENLLKICVFIFAFIMPVLIITVCYG. Residues 256–279 lie on the Cytoplasmic side of the membrane; the sequence is LMILRLKSVRMLSGSKEKDRNLRR. A helical membrane pass occupies residues 280–306; sequence ITRMVLVVVAVFIVCWTPIHIYVIIKA. Residues 307–314 are Extracellular-facing; the sequence is LVTIPETT. Residues 315 to 338 traverse the membrane as a helical segment; sequence FQTVSWHFCIALGYTNSCLNPVLY. The NPxxY; plays a role in stabilizing the activated conformation of the receptor motif lies at 334–338; that stretch reads NPVLY. The Cytoplasmic portion of the chain corresponds to 339 to 400; sequence AFLDENFKRC…NLEAETAPLP (62 aa). Cys353 is lipidated: S-palmitoyl cysteine. Ser365 carries the phosphoserine modification. Thr372 carries the post-translational modification Phosphothreonine. A Phosphoserine modification is found at Ser377. At Thr396 the chain carries Phosphothreonine.

The protein belongs to the G-protein coupled receptor 1 family. As to quaternary structure, forms homooligomers and heterooligomers with other GPCRs, such as OPRD1, OPRK1, OPRL1, NPFFR2, ADRA2A, SSTR2, CNR1 and CCR5 (probably in dimeric forms). Interacts with heterotrimeric G proteins; interaction with a heterotrimeric complex containing GNAI1, GNB1 and GNG2 stabilizes the active conformation of the receptor and increases its affinity for endomorphin-2, the synthetic opioid peptide DAMGO and for morphinan agonists. Interacts with PPL; the interaction disrupts agonist-mediated G-protein activation. Interacts (via C-terminus) with DNAJB4 (via C-terminus). Interacts with calmodulin; the interaction inhibits the constitutive activity of OPRM1; it abolishes basal and attenuates agonist-stimulated G-protein coupling. Interacts with FLNA, PLD2, RANBP9 and WLS and GPM6A. Interacts with RTP4. Interacts with SYP and GNAS. Interacts with RGS9, RGS17, RGS20, RGS4, PPP1R9B and HINT1. In terms of processing, phosphorylated. Differentially phosphorylated in basal and agonist-induced conditions. Agonist-mediated phosphorylation modulates receptor internalization. Phosphorylated by GRK2 in a agonist-dependent manner. Phosphorylation at Tyr-168 requires receptor activation, is dependent on non-receptor protein tyrosine kinase Src and results in a decrease in agonist efficacy by reducing G-protein coupling efficiency. Phosphorylated on tyrosine residues; the phosphorylation is involved in agonist-induced G-protein-independent receptor down-regulation. Phosphorylation at Ser-377 is involved in G-protein-dependent but not beta-arrestin-dependent activation of the ERK pathway. Post-translationally, ubiquitinated. A basal ubiquitination seems not to be related to degradation. Ubiquitination is increased upon formation of OPRM1:OPRD1 oligomers leading to proteasomal degradation; the ubiquitination is diminished by RTP4. As to expression, expressed in brain. Isoform 16 and isoform 17 are detected in brain.

The protein localises to the cell membrane. The protein resides in the cell projection. It localises to the axon. It is found in the perikaryon. Its subcellular location is the dendrite. The protein localises to the endosome. The protein resides in the cytoplasm. Receptor for endogenous opioids such as beta-endorphin and endomorphin. Receptor for natural and synthetic opioids including morphine, heroin, DAMGO, fentanyl, etorphine, buprenorphin and methadone. Also activated by enkephalin peptides, such as Met-enkephalin or Met-enkephalin-Arg-Phe, with higher affinity for Met-enkephalin-Arg-Phe. Agonist binding to the receptor induces coupling to an inactive GDP-bound heterotrimeric G-protein complex and subsequent exchange of GDP for GTP in the G-protein alpha subunit leading to dissociation of the G-protein complex with the free GTP-bound G-protein alpha and the G-protein beta-gamma dimer activating downstream cellular effectors. The agonist- and cell type-specific activity is predominantly coupled to pertussis toxin-sensitive G(i) and G(o) G alpha proteins, GNAI1, GNAI2, GNAI3 and GNAO1 isoforms Alpha-1 and Alpha-2, and to a lesser extent to pertussis toxin-insensitive G alpha proteins GNAZ and GNA15. They mediate an array of downstream cellular responses, including inhibition of adenylate cyclase activity and both N-type and L-type calcium channels, activation of inward rectifying potassium channels, mitogen-activated protein kinase (MAPK), phospholipase C (PLC), phosphoinositide/protein kinase (PKC), phosphoinositide 3-kinase (PI3K) and regulation of NF-kappa-B. Also couples to adenylate cyclase stimulatory G alpha proteins. The selective temporal coupling to G-proteins and subsequent signaling can be regulated by RGSZ proteins, such as RGS9, RGS17 and RGS4. Phosphorylation by members of the GPRK subfamily of Ser/Thr protein kinases and association with beta-arrestins is involved in short-term receptor desensitization. Beta-arrestins associate with the GPRK-phosphorylated receptor and uncouple it from the G-protein thus terminating signal transduction. The phosphorylated receptor is internalized through endocytosis via clathrin-coated pits which involves beta-arrestins. The activation of the ERK pathway occurs either in a G-protein-dependent or a beta-arrestin-dependent manner and is regulated by agonist-specific receptor phosphorylation. Acts as a class A G-protein coupled receptor (GPCR) which dissociates from beta-arrestin at or near the plasma membrane and undergoes rapid recycling. Receptor down-regulation pathways are varying with the agonist and occur dependent or independent of G-protein coupling. Endogenous ligands induce rapid desensitization, endocytosis and recycling. Heterooligomerization with other GPCRs can modulate agonist binding, signaling and trafficking properties. In terms of biological role, couples to GNAS and is proposed to be involved in excitatory effects. Its function is as follows. Does not bind agonists but may act through oligomerization with binding-competent OPRM1 isoforms and reduce their ligand binding activity. The protein is Mu-type opioid receptor (OPRM1) of Homo sapiens (Human).